Consider the following 202-residue polypeptide: D-alanyl-D-alanine dipeptidase (202 aa).

2 residues coordinate Zn(2+): H116 and D123. The active-site Proton donor/acceptor is E181. A Zn(2+)-binding site is contributed by H184.

This sequence belongs to the peptidase M15D family. As to quaternary structure, homodimer. Requires Zn(2+) as cofactor. Fe(2+) serves as cofactor. It depends on Co(2+) as a cofactor. The cofactor is Ni(2+).

The enzyme catalyses D-alanyl-D-alanine + H2O = 2 D-alanine. With respect to regulation, inhibited by aminoalkyl phosphinate analogs. In terms of biological role, catalyzes hydrolysis of the D-alanyl-D-alanine dipeptide. The sequence is that of D-alanyl-D-alanine dipeptidase (vanX) from Enterococcus faecium (Streptococcus faecium).